We begin with the raw amino-acid sequence, 400 residues long: MIIKPKIRGFICTTTHPVGCEANVQEQITLTKAKGKIANGPKKVLVVGSSSGYGLSSRIAAAFGSDAATIGVFFEKPGTETKPGTAGWYNSAAFDKFAKAEGLYSKSINCDAFSHEAKQKVIELIKQDLGEIDMVVYSLASPVRKLPDSGELIRSALKPIGETYTATAVDTNKDCIIEATVEPATEQEIADTVTVMGGEDWELWIKALSEAGVLADNCKTVAYSYIGTELTWPIYWHGALGKAKMDLDRAAKALNEQLSATGGSANVAVLKSVVTQASSAIPVMPLYIAMVFKKMRQEGLHEGCMEQIYRMFSERLFRADGAKPETDSDNRIRLDDWELREDIQQHCRNLWPQVTTENLSELTDYREYKAEFIKLFGFGIEGIDYDADVNPYVEFDVIEL.

Residues 48-53 (GSSSGY), 74-75 (FE), 111-112 (DA), and 139-140 (LA) contribute to the NAD(+) site. A substrate-binding site is contributed by Tyr-225. Tyr-235 (proton donor) is an active-site residue. NAD(+)-binding positions include Lys-244 and 273–275 (VVT).

It belongs to the TER reductase family. In terms of assembly, monomer.

It catalyses the reaction a 2,3-saturated acyl-[ACP] + NAD(+) = a (2E)-enoyl-[ACP] + NADH + H(+). It participates in lipid metabolism; fatty acid biosynthesis. Involved in the final reduction of the elongation cycle of fatty acid synthesis (FAS II). Catalyzes the reduction of a carbon-carbon double bond in an enoyl moiety that is covalently linked to an acyl carrier protein (ACP). This chain is Enoyl-[acyl-carrier-protein] reductase [NADH], found in Shewanella baltica (strain OS223).